Consider the following 185-residue polypeptide: Ribosome-recycling factor (185 aa).

The protein belongs to the RRF family.

Its subcellular location is the cytoplasm. Responsible for the release of ribosomes from messenger RNA at the termination of protein biosynthesis. May increase the efficiency of translation by recycling ribosomes from one round of translation to another. This Beutenbergia cavernae (strain ATCC BAA-8 / DSM 12333 / CCUG 43141 / JCM 11478 / NBRC 16432 / NCIMB 13614 / HKI 0122) protein is Ribosome-recycling factor.